We begin with the raw amino-acid sequence, 182 residues long: MSYVPALKKHYKDNIIKELVSEFQYKSIMQAPKIEKIIVSMGVGDAVKNKKLLDSAVYELSQITGQRAVKTKAKKAIAGFKIRQGQEIGAKVTLRGNIMYEFLYKLINLALPRVKDFRGVNGNAFDGNGNYSFGIAEQIIFSEIDYDKIERISGLNVTIVTTALNDREGKALLSKFGMPFSN.

This sequence belongs to the universal ribosomal protein uL5 family. As to quaternary structure, part of the 50S ribosomal subunit; part of the 5S rRNA/L5/L18/L25 subcomplex. Contacts the 5S rRNA and the P site tRNA. Forms a bridge to the 30S subunit in the 70S ribosome.

In terms of biological role, this is one of the proteins that bind and probably mediate the attachment of the 5S RNA into the large ribosomal subunit, where it forms part of the central protuberance. In the 70S ribosome it contacts protein S13 of the 30S subunit (bridge B1b), connecting the 2 subunits; this bridge is implicated in subunit movement. Contacts the P site tRNA; the 5S rRNA and some of its associated proteins might help stabilize positioning of ribosome-bound tRNAs. The sequence is that of Large ribosomal subunit protein uL5 from Borrelia turicatae (strain 91E135).